We begin with the raw amino-acid sequence, 423 residues long: Glycine amidinotransferase, mitochondrial (423 aa).

The N-terminal 43 residues, 1 to 43 (MLRVRCLRGGSRGAEALHYIGSRLGRTVTGWVQRTFQSTQAAT), are a transit peptide targeting the mitochondrion. Phosphoserine is present on residues S46 and S49. Arginine is bound at residue D170. Residues D254 and H303 contribute to the active site. Residues D305, R322, S354, and S355 each contribute to the arginine site. N6-acetyllysine is present on K385. C407 (amidino-cysteine intermediate) is an active-site residue.

It belongs to the amidinotransferase family. In terms of assembly, homodimer. Kidney. Expressed biallelically in placenta.

Its subcellular location is the mitochondrion inner membrane. The catalysed reaction is L-arginine + glycine = guanidinoacetate + L-ornithine. It catalyses the reaction 4-aminobutanoate + L-arginine = 4-guanidinobutanoate + L-ornithine. The enzyme catalyses beta-alanine + L-arginine = 3-guanidinopropanoate + L-ornithine. It carries out the reaction taurine + L-arginine = taurocyamine + L-ornithine. Its pathway is amine and polyamine biosynthesis; creatine biosynthesis; creatine from L-arginine and glycine: step 1/2. Transamidinase that catalyzes the transfer of the amidino group of L-arginine onto the amino moiety of acceptor metabolites such as glycine, beta-alanine, gamma-aminobutyric acid (GABA) and taurine yielding the corresponding guanidine derivatives. Catalyzes the rate-limiting step of creatine biosynthesis, namely the transfer of the amidino group from L-arginine to glycine to generate guanidinoacetate, which is then methylated by GAMT to form creatine. Provides creatine as a source for ATP generation in tissues with high energy demands, in particular skeletal muscle, heart and brain. This chain is Glycine amidinotransferase, mitochondrial (GATM), found in Sus scrofa (Pig).